The primary structure comprises 422 residues: ATP-dependent Clp protease ATP-binding subunit ClpX 1 (422 aa).

Residues 4 to 57 (DRKNRESGKLLYCSFCGKSQHEVRKLIAGPAVFVCDECVELCNDIIREDLQGSE) form the ClpX-type ZB domain. Cys-16, Cys-19, Cys-38, and Cys-41 together coordinate Zn(2+). 120–127 (PTGSGKTL) provides a ligand contact to ATP.

Belongs to the ClpX chaperone family. As to quaternary structure, component of the ClpX-ClpP complex. Forms a hexameric ring that, in the presence of ATP, binds to fourteen ClpP subunits assembled into a disk-like structure with a central cavity, resembling the structure of eukaryotic proteasomes.

Functionally, ATP-dependent specificity component of the Clp protease. It directs the protease to specific substrates. Can perform chaperone functions in the absence of ClpP. This Methylococcus capsulatus (strain ATCC 33009 / NCIMB 11132 / Bath) protein is ATP-dependent Clp protease ATP-binding subunit ClpX 1.